Reading from the N-terminus, the 1834-residue chain is Structure-specific endonuclease subunit SLX4 (1834 aa).

The interaction with SLX4IP, ERCC4/XPF and MSH2 stretch occupies residues Met1–Arg669. Residues Pro24 to Glu49 are disordered. Residue Lys68 forms a Glycyl lysine isopeptide (Lys-Gly) (interchain with G-Cter in SUMO2) linkage. Positions Glu69–Ala206 are disordered. Residues Lys78–Arg87 are compositionally biased toward polar residues. Residues Gln95–Gln104 show a composition bias toward low complexity. Composition is skewed to polar residues over residues Thr156 to Leu172 and Asn180 to Arg204. Phosphoserine is present on Ser169. At Ser287 the chain carries Phosphoserine. A Glycyl lysine isopeptide (Lys-Gly) (interchain with G-Cter in SUMO2) cross-link involves residue Lys291. UBZ4-type zinc fingers lie at residues Leu293–Glu323 and Ile333–Glu361. Positions 296, 299, 314, 318, 336, and 339 each coordinate Zn(2+). Lys347 participates in a covalent cross-link: Glycyl lysine isopeptide (Lys-Gly) (interchain with G-Cter in SUMO2). Residues His352 and Cys356 each coordinate Zn(2+). Residue Lys359 forms a Glycyl lysine isopeptide (Lys-Gly) (interchain with G-Cter in SUMO2) linkage. Over residues Ala376–Pro385 the composition is skewed to polar residues. 3 disordered regions span residues Ala376–Pro417, Arg452–Leu471, and Gln561–Gln610. The span at Gly395–Arg411 shows a compositional bias: basic residues. Residues Lys412 and Lys458 each participate in a glycyl lysine isopeptide (Lys-Gly) (interchain with G-Cter in SUMO2) cross-link. The span at Glu575 to Ser584 shows a compositional bias: basic and acidic residues. An interaction with PLK1 and TERF2-TERF2IP region spans residues Met684–Asn1834. Residues Ser691 to Pro764 form the BTB domain. The stretch at Glu801–Ala870 forms a coiled coil. 2 disordered regions span residues Glu826–Val846 and Lys902–Val1151. Glycyl lysine isopeptide (Lys-Gly) (interchain with G-Cter in SUMO2) cross-links involve residues Lys835, Lys902, and Lys970. Basic and acidic residues-rich tracts occupy residues Lys902–Ala916 and Cys965–Asp979. Residues Leu986–Ser1002 show a composition bias toward polar residues. Residues Val1011–His1020 show a composition bias toward basic and acidic residues. Phosphoserine is present on residues Ser1028, Ser1044, and Ser1070. The span at Pro1059 to Leu1073 shows a compositional bias: polar residues. Glycyl lysine isopeptide (Lys-Gly) (interchain with G-Cter in SUMO2) cross-links involve residues Lys1081 and Lys1093. A compositionally biased stretch (basic and acidic residues) spans Glu1094 to Asn1111. Glycyl lysine isopeptide (Lys-Gly) (interchain with G-Cter in SUMO2) cross-links involve residues Lys1112 and Lys1120. Ser1121 is subject to Phosphoserine. The span at Ile1124–His1133 shows a compositional bias: polar residues. Ser1135 carries the phosphoserine modification. Residues Lys1169, Lys1179, and Lys1180 each participate in a glycyl lysine isopeptide (Lys-Gly) (interchain with G-Cter in SUMO2) cross-link. The residue at position 1185 (Ser1185) is a Phosphoserine. Disordered stretches follow at residues Ile1195–Ser1504 and Gly1516–Pro1564. Composition is skewed to polar residues over residues Pro1245–Ser1254 and Cys1269–Arg1279. The interval Val1328 to Thr1648 is interaction with MUS81. The segment covering Gln1338–Gly1350 has biased composition (basic residues). The segment covering His1351–Ile1362 has biased composition (low complexity). The span at Glu1394–Glu1403 shows a compositional bias: acidic residues. Positions Arg1457–Arg1468 are enriched in basic and acidic residues. Phosphoserine is present on residues Ser1464 and Ser1469. A compositionally biased stretch (polar residues) spans Ser1481–Ser1504. Residues Lys1575 and Lys1576 each participate in a glycyl lysine isopeptide (Lys-Gly) (interchain with G-Cter in SUMO2) cross-link. The segment at Thr1605–Ala1746 is disordered. Position 1610 is a phosphoserine (Ser1610). The interval Gln1632–Asn1834 is interaction with SLX1. Positions His1654–His1672 are enriched in basic residues. Lys1657 participates in a covalent cross-link: Glycyl lysine isopeptide (Lys-Gly) (interchain with G-Cter in SUMO2). Residues Ser1706–Ser1730 show a composition bias toward low complexity.

This sequence belongs to the SLX4 family. Forms a heterodimer with SLX1A/GIYD1. Interacts with ERCC4/XPF; catalytic subunit of the ERCC4-ERCC1 endonuclease. Interacts with MUS81; catalytic subunit of the MUS81-EME1 endonuclease. Interacts with MSH2; component of the MSH2-MSH3 mismatch repair complex. Interacts with TERF2-TERF2IP. Interacts with PLK1 and SLX4IP.

It localises to the nucleus. Functionally, regulatory subunit that interacts with and increases the activity of different structure-specific endonucleases. Has several distinct roles in protecting genome stability by resolving diverse forms of deleterious DNA structures originating from replication and recombination intermediates and from DNA damage. Component of the SLX1-SLX4 structure-specific endonuclease that resolves DNA secondary structures generated during DNA repair and recombination. Has endonuclease activity towards branched DNA substrates, introducing single-strand cuts in duplex DNA close to junctions with ss-DNA. Has a preference for 5'-flap structures, and promotes symmetrical cleavage of static and migrating Holliday junctions (HJs). Resolves HJs by generating two pairs of ligatable, nicked duplex products. Interacts with the structure-specific ERCC4-ERCC1 endonuclease and promotes the cleavage of bubble structures. Interacts with the structure-specific MUS81-EME1 endonuclease and promotes the cleavage of 3'-flap and replication fork-like structures. SLX4 is required for recovery from alkylation-induced DNA damage and is involved in the resolution of DNA double-strand breaks. The sequence is that of Structure-specific endonuclease subunit SLX4 (SLX4) from Homo sapiens (Human).